A 125-amino-acid polypeptide reads, in one-letter code: Holo-[acyl-carrier-protein] synthase (125 aa).

Positions 8 and 56 each coordinate Mg(2+).

This sequence belongs to the P-Pant transferase superfamily. AcpS family. Requires Mg(2+) as cofactor.

The protein localises to the cytoplasm. The catalysed reaction is apo-[ACP] + CoA = holo-[ACP] + adenosine 3',5'-bisphosphate + H(+). Transfers the 4'-phosphopantetheine moiety from coenzyme A to a Ser of acyl-carrier-protein. This is Holo-[acyl-carrier-protein] synthase from Borrelia hermsii (strain HS1 / DAH).